Consider the following 760-residue polypeptide: Catalase-peroxidase (760 aa).

A signal peptide spans 1–45; the sequence is MKGTPFRSPHLYQEGSSCMHRTIRSVAAVLTVVLSATIPMVPAWS. Residues 124–245 constitute a cross-link (tryptophyl-tyrosyl-methioninium (Trp-Tyr) (with M-271)); it reads WHGAGTYRTY…LAATQMGLIY (122 aa). His125 serves as the catalytic Proton acceptor. Positions 245 to 271 form a cross-link, tryptophyl-tyrosyl-methioninium (Tyr-Met) (with W-124); the sequence is YVNPEGPNGVPDPVAAARDIREAFGGM. His286 serves as a coordination point for heme b.

This sequence belongs to the peroxidase family. Peroxidase/catalase subfamily. Homodimer or homotetramer. Requires heme b as cofactor. In terms of processing, formation of the three residue Trp-Tyr-Met cross-link is important for the catalase, but not the peroxidase activity of the enzyme.

It catalyses the reaction H2O2 + AH2 = A + 2 H2O. It carries out the reaction 2 H2O2 = O2 + 2 H2O. In terms of biological role, bifunctional enzyme with both catalase and broad-spectrum peroxidase activity. This Granulibacter bethesdensis (strain ATCC BAA-1260 / CGDNIH1) protein is Catalase-peroxidase.